Here is a 317-residue protein sequence, read N- to C-terminus: Protease HtpX homolog (317 aa).

2 helical membrane passes run 14 to 34 (LMGI…LYYI) and 41 to 61 (IALL…QWLF). Position 146 (H146) interacts with Zn(2+). The active site involves E147. H150 contributes to the Zn(2+) binding site. Transmembrane regions (helical) follow at residues 158-178 (MLLA…TLLF) and 189-209 (IVLL…LILA). E215 contributes to the Zn(2+) binding site.

Belongs to the peptidase M48B family. The cofactor is Zn(2+).

The protein resides in the cell membrane. The sequence is that of Protease HtpX homolog from Thermoplasma acidophilum (strain ATCC 25905 / DSM 1728 / JCM 9062 / NBRC 15155 / AMRC-C165).